The primary structure comprises 475 residues: Aspartyl/glutamyl-tRNA(Asn/Gln) amidotransferase subunit B (475 aa).

The protein belongs to the GatB/GatE family. GatB subfamily. As to quaternary structure, heterotrimer of A, B and C subunits.

It catalyses the reaction L-glutamyl-tRNA(Gln) + L-glutamine + ATP + H2O = L-glutaminyl-tRNA(Gln) + L-glutamate + ADP + phosphate + H(+). The enzyme catalyses L-aspartyl-tRNA(Asn) + L-glutamine + ATP + H2O = L-asparaginyl-tRNA(Asn) + L-glutamate + ADP + phosphate + 2 H(+). Functionally, allows the formation of correctly charged Asn-tRNA(Asn) or Gln-tRNA(Gln) through the transamidation of misacylated Asp-tRNA(Asn) or Glu-tRNA(Gln) in organisms which lack either or both of asparaginyl-tRNA or glutaminyl-tRNA synthetases. The reaction takes place in the presence of glutamine and ATP through an activated phospho-Asp-tRNA(Asn) or phospho-Glu-tRNA(Gln). This Thermodesulfovibrio yellowstonii (strain ATCC 51303 / DSM 11347 / YP87) protein is Aspartyl/glutamyl-tRNA(Asn/Gln) amidotransferase subunit B.